Consider the following 283-residue polypeptide: 4-diphosphocytidyl-2-C-methyl-D-erythritol kinase (283 aa).

Lys-9 is a catalytic residue. 93-103 (PIAAGLAGGSS) is a binding site for ATP. Residue Asp-135 is part of the active site.

This sequence belongs to the GHMP kinase family. IspE subfamily.

It carries out the reaction 4-CDP-2-C-methyl-D-erythritol + ATP = 4-CDP-2-C-methyl-D-erythritol 2-phosphate + ADP + H(+). Its pathway is isoprenoid biosynthesis; isopentenyl diphosphate biosynthesis via DXP pathway; isopentenyl diphosphate from 1-deoxy-D-xylulose 5-phosphate: step 3/6. In terms of biological role, catalyzes the phosphorylation of the position 2 hydroxy group of 4-diphosphocytidyl-2C-methyl-D-erythritol. This is 4-diphosphocytidyl-2-C-methyl-D-erythritol kinase from Macrococcus caseolyticus (strain JCSC5402) (Macrococcoides caseolyticum).